We begin with the raw amino-acid sequence, 570 residues long: Urease subunit alpha (570 aa).

A Urease domain is found at 131-570 (GGMDSHIHFI…LPMAQRYFLF (440 aa)). Residues histidine 136, histidine 138, and lysine 219 each contribute to the Ni(2+) site. The residue at position 219 (lysine 219) is an N6-carboxylysine. Histidine 221 provides a ligand contact to substrate. Residues histidine 248 and histidine 274 each contribute to the Ni(2+) site. Residue histidine 322 is the Proton donor of the active site. Aspartate 362 contacts Ni(2+).

It belongs to the metallo-dependent hydrolases superfamily. Urease alpha subunit family. In terms of assembly, heterotrimer of UreA (gamma), UreB (beta) and UreC (alpha) subunits. Three heterotrimers associate to form the active enzyme. Requires Ni cation as cofactor. Carboxylation allows a single lysine to coordinate two nickel ions.

It is found in the cytoplasm. The enzyme catalyses urea + 2 H2O + H(+) = hydrogencarbonate + 2 NH4(+). It functions in the pathway nitrogen metabolism; urea degradation; CO(2) and NH(3) from urea (urease route): step 1/1. This Rhizobium leguminosarum bv. trifolii (strain WSM2304) protein is Urease subunit alpha.